We begin with the raw amino-acid sequence, 317 residues long: MKVFNKKVAIIGTGFVGTSIAYSMINQGIANELILVDIDKAKSEGEAIDLLDGVSWGQENVNVWAGDYQDCQDADIVVITAGANQKPGQSRLDLVSINAEIMKTIVNNIMKSGFDGILVIASNPVDVLTYVAWQASGLPVSRVIGTGTTLDTTRFRKELSQRLAIDPRNVHGYIIGEHGDSEVAVWSHTMIGTKPILEIVDTTERLTSDDLPIISDKVKNTAYEIIDRKQATYYGIGMSTARIVKAILNNEQAILPVSAYLDGQYGQQDVFTGIPAVVGNQGVTDIIELNLNAAEKELFQKSVTQLKQVMASLQPNA.

Residues Val-16, Asp-37, Lys-42, Tyr-68, and 82-83 (GA) contribute to the NAD(+) site. Residues Gln-85 and Arg-91 each coordinate substrate. NAD(+)-binding positions include Thr-104, 121 to 123 (ASN), and Thr-146. Residue 123–126 (NPVD) participates in substrate binding. 151-154 (DTTR) lines the substrate pocket. 2 residues coordinate beta-D-fructose 1,6-bisphosphate: Arg-156 and His-171. The active-site Proton acceptor is His-178. Tyr-223 carries the phosphotyrosine modification. Thr-232 is a binding site for substrate.

The protein belongs to the LDH/MDH superfamily. LDH family. In terms of assembly, homotetramer.

It is found in the cytoplasm. The enzyme catalyses (S)-lactate + NAD(+) = pyruvate + NADH + H(+). It functions in the pathway fermentation; pyruvate fermentation to lactate; (S)-lactate from pyruvate: step 1/1. Allosterically activated by fructose 1,6-bisphosphate (FBP). Functionally, catalyzes the conversion of lactate to pyruvate. This chain is L-lactate dehydrogenase 2, found in Enterococcus faecalis (strain ATCC 700802 / V583).